Reading from the N-terminus, the 408-residue chain is CCA-adding enzyme (408 aa).

ATP contacts are provided by Gly-8 and Arg-11. CTP-binding residues include Gly-8 and Arg-11. Mg(2+) is bound by residues Glu-21 and Asp-23. Arg-91, Arg-137, and Arg-140 together coordinate ATP. CTP is bound by residues Arg-91, Arg-137, and Arg-140. Residues 226 to 329 enclose the HD domain; that stretch reads TGYYTMTTLS…MTLFHVFDCW (104 aa).

The protein belongs to the tRNA nucleotidyltransferase/poly(A) polymerase family. Bacterial CCA-adding enzyme type 2 subfamily. It depends on Mg(2+) as a cofactor.

The enzyme catalyses a tRNA precursor + 2 CTP + ATP = a tRNA with a 3' CCA end + 3 diphosphate. The catalysed reaction is a tRNA with a 3' CCA end + 2 CTP + ATP = a tRNA with a 3' CCACCA end + 3 diphosphate. Catalyzes the addition and repair of the essential 3'-terminal CCA sequence in tRNAs without using a nucleic acid template. Adds these three nucleotides in the order of C, C, and A to the tRNA nucleotide-73, using CTP and ATP as substrates and producing inorganic pyrophosphate. tRNA 3'-terminal CCA addition is required both for tRNA processing and repair. Also involved in tRNA surveillance by mediating tandem CCA addition to generate a CCACCA at the 3' terminus of unstable tRNAs. While stable tRNAs receive only 3'-terminal CCA, unstable tRNAs are marked with CCACCA and rapidly degraded. The polypeptide is CCA-adding enzyme (Blochmanniella pennsylvanica (strain BPEN)).